Consider the following 278-residue polypeptide: Tryptophan synthase alpha chain (278 aa).

Active-site proton acceptor residues include Glu-50 and Asp-61.

The protein belongs to the TrpA family. In terms of assembly, tetramer of two alpha and two beta chains.

The catalysed reaction is (1S,2R)-1-C-(indol-3-yl)glycerol 3-phosphate + L-serine = D-glyceraldehyde 3-phosphate + L-tryptophan + H2O. The protein operates within amino-acid biosynthesis; L-tryptophan biosynthesis; L-tryptophan from chorismate: step 5/5. Its function is as follows. The alpha subunit is responsible for the aldol cleavage of indoleglycerol phosphate to indole and glyceraldehyde 3-phosphate. This chain is Tryptophan synthase alpha chain, found in Methylobacterium nodulans (strain LMG 21967 / CNCM I-2342 / ORS 2060).